The primary structure comprises 208 residues: 3-isopropylmalate dehydratase small subunit 2 (208 aa).

This sequence belongs to the LeuD family. LeuD type 1 subfamily. Heterodimer of LeuC and LeuD.

It catalyses the reaction (2R,3S)-3-isopropylmalate = (2S)-2-isopropylmalate. The protein operates within amino-acid biosynthesis; L-leucine biosynthesis; L-leucine from 3-methyl-2-oxobutanoate: step 2/4. Catalyzes the isomerization between 2-isopropylmalate and 3-isopropylmalate, via the formation of 2-isopropylmaleate. The sequence is that of 3-isopropylmalate dehydratase small subunit 2 (leuD2) from Salmonella typhimurium (strain LT2 / SGSC1412 / ATCC 700720).